The following is a 636-amino-acid chain: Probable potassium transport system protein Kup (636 aa).

12 helical membrane-spanning segments follow: residues 23–43 (LVIG…LYSL), 63–83 (IISL…VVFV), 114–134 (VLMM…VITP), 150–170 (PQLS…LFLI), 182–202 (FGPV…YNLV), 217–237 (ISFL…VFLV), 260–280 (WFVL…AMLL), 298–318 (LLIP…QAVI), 350–370 (IYLP…VISF), 379–399 (AYGI…AVVM), 407–427 (PALV…FFAA), and 432–452 (VAEG…LLMT).

It belongs to the HAK/KUP transporter (TC 2.A.72) family.

The protein localises to the cell inner membrane. The enzyme catalyses K(+)(in) + H(+)(in) = K(+)(out) + H(+)(out). In terms of biological role, transport of potassium into the cell. Likely operates as a K(+):H(+) symporter. The protein is Probable potassium transport system protein Kup of Cupriavidus pinatubonensis (strain JMP 134 / LMG 1197) (Cupriavidus necator (strain JMP 134)).